The primary structure comprises 910 residues: DNA mismatch repair protein MutS (910 aa).

Basic and acidic residues predominate over residues 1–11 (MEAKVEEKEPE). Residues 1-21 (MEAKVEEKEPEPVENAGPDAP) are disordered. An ATP-binding site is contributed by 658–665 (GPNMGGKS).

It belongs to the DNA mismatch repair MutS family.

This protein is involved in the repair of mismatches in DNA. It is possible that it carries out the mismatch recognition step. This protein has a weak ATPase activity. The sequence is that of DNA mismatch repair protein MutS from Brucella melitensis biotype 1 (strain ATCC 23456 / CCUG 17765 / NCTC 10094 / 16M).